The chain runs to 263 residues: Glutamate racemase (263 aa).

Residues 13 to 14 (DS) and 45 to 46 (YG) each bind substrate. C77 acts as the Proton donor/acceptor in catalysis. A substrate-binding site is contributed by 78 to 79 (NT). The active-site Proton donor/acceptor is the C185. 186-187 (TH) is a substrate binding site.

The protein belongs to the aspartate/glutamate racemases family.

The enzyme catalyses L-glutamate = D-glutamate. Its pathway is cell wall biogenesis; peptidoglycan biosynthesis. Functionally, provides the (R)-glutamate required for cell wall biosynthesis. The chain is Glutamate racemase from Vibrio vulnificus (strain YJ016).